The sequence spans 447 residues: Glutamate--tRNA ligase 2 (447 aa).

A 'HIGH' region motif is present at residues 9-19; that stretch reads PSPTGYLHIGN. The 'KMSKS' region signature appears at 240-244; that stretch reads GLSKR. K243 contacts ATP.

The protein belongs to the class-I aminoacyl-tRNA synthetase family. Glutamate--tRNA ligase type 1 subfamily. In terms of assembly, monomer.

It is found in the cytoplasm. The enzyme catalyses tRNA(Glu) + L-glutamate + ATP = L-glutamyl-tRNA(Glu) + AMP + diphosphate. Catalyzes the attachment of glutamate to tRNA(Glu) in a two-step reaction: glutamate is first activated by ATP to form Glu-AMP and then transferred to the acceptor end of tRNA(Glu). This Methylobacterium sp. (strain 4-46) protein is Glutamate--tRNA ligase 2.